The chain runs to 243 residues: ABC transporter arginine-binding protein 1 (243 aa).

An N-terminal signal peptide occupies residues Met-1–Ala-19.

It belongs to the bacterial solute-binding protein 3 family. The complex is composed of two ATP-binding proteins (ArtP), two transmembrane proteins (ArtM and ArtQ) and two solute-binding proteins (ArtJ and ArtI).

Its subcellular location is the periplasm. Functionally, part of the ABC transporter complex ArtPIQMJ involved in arginine transport. Binds L-arginine with high affinity. This Escherichia coli (strain K12) protein is ABC transporter arginine-binding protein 1 (artJ).